Here is a 37-residue protein sequence, read N- to C-terminus: Large ribosomal subunit protein bL36 (37 aa).

Belongs to the bacterial ribosomal protein bL36 family.

This is Large ribosomal subunit protein bL36 from Shewanella frigidimarina (strain NCIMB 400).